The following is a 359-amino-acid chain: Peptide chain release factor 1 (359 aa).

Gln-233 carries the post-translational modification N5-methylglutamine.

This sequence belongs to the prokaryotic/mitochondrial release factor family. Post-translationally, methylated by PrmC. Methylation increases the termination efficiency of RF1.

The protein localises to the cytoplasm. In terms of biological role, peptide chain release factor 1 directs the termination of translation in response to the peptide chain termination codons UAG and UAA. The sequence is that of Peptide chain release factor 1 from Cytophaga hutchinsonii (strain ATCC 33406 / DSM 1761 / CIP 103989 / NBRC 15051 / NCIMB 9469 / D465).